The following is a 61-amino-acid chain: Bacteriocin leucocin-A (61 aa).

Residues 1–24 (MMNMKPTESYEQLDNSALEQVVGG) constitute a propeptide that is removed on maturation. C33 and C38 are disulfide-bonded.

This sequence belongs to the bacteriocin class IIA/YGNGV family.

It localises to the secreted. Functionally, inhibits a wide spectrum of lactic acid bacteria. The protein is Bacteriocin leucocin-A (lcnA) of Leuconostoc gelidum.